We begin with the raw amino-acid sequence, 507 residues long: MKVKPVTVTGSSLTIEDVVAVARHGAEVKLSADAKKRIKDSKKIVDDIVKSGKPTYGISTGFGELSTVTITKDQNGALQRNLILSHACGVGNPFPEDIVRAIMLLRLNTHASGFSGVTPSVPDILVDMLNKGVIPYVPEKGSLGASGDLANLAHIALVMIGEGKAYYEGKLMEGKAALAKAGLKPVVLSGKDGLGIINGTPVMSGIGALALHDAEQLLKAANMGASLVFEAFRGITAALDPRIHKSRPHKGQIDTAAFILKMLKGSSSINTRENDVQDPYTLRCVPQVHGASADAIAYVRKVLEIEINAVTDNPLVFPDNHDVISGGNFHGQPIAITMDFLGIAVSELANISERRIERLVNPQLNGGLPAFLIENGGVNSGFMIPQYTAASLVSENKVLAHPASVDSITSSGNKEDHVSMGTTAARKITEIVKNVRHVLAIEWLTAAQACDLRGVKKYGKGTGEMMKLIRKHISKVTEDRILYNDIMKALEIISNDENIDMIENAAK.

The 5-imidazolinone (Ala-Gly) cross-link spans 145 to 147 (ASG). A 2,3-didehydroalanine (Ser) modification is found at Ser-146.

This sequence belongs to the PAL/histidase family. In terms of processing, contains an active site 4-methylidene-imidazol-5-one (MIO), which is formed autocatalytically by cyclization and dehydration of residues Ala-Ser-Gly.

It localises to the cytoplasm. It catalyses the reaction L-histidine = trans-urocanate + NH4(+). It participates in amino-acid degradation; L-histidine degradation into L-glutamate; N-formimidoyl-L-glutamate from L-histidine: step 1/3. In Treponema denticola (strain ATCC 35405 / DSM 14222 / CIP 103919 / JCM 8153 / KCTC 15104), this protein is Histidine ammonia-lyase.